We begin with the raw amino-acid sequence, 355 residues long: DNA polymerase IV (355 aa).

A UmuC domain is found at 4 to 185 (IIHVDMDCFY…LPLKKIPGVG (182 aa)). Mg(2+) is bound by residues D8 and D103. The active site involves E104.

The protein belongs to the DNA polymerase type-Y family. Monomer. The cofactor is Mg(2+).

The protein localises to the cytoplasm. The enzyme catalyses DNA(n) + a 2'-deoxyribonucleoside 5'-triphosphate = DNA(n+1) + diphosphate. Functionally, poorly processive, error-prone DNA polymerase involved in untargeted mutagenesis. Copies undamaged DNA at stalled replication forks, which arise in vivo from mismatched or misaligned primer ends. These misaligned primers can be extended by PolIV. Exhibits no 3'-5' exonuclease (proofreading) activity. May be involved in translesional synthesis, in conjunction with the beta clamp from PolIII. This Pasteurella multocida (strain Pm70) protein is DNA polymerase IV.